Reading from the N-terminus, the 323-residue chain is Sphingolipid delta(4)-desaturase DES1 (323 aa).

The N-myristoyl glycine moiety is linked to residue glycine 2. 2 helical membrane passes run 41–61 and 68–88; these read PNLIWIVTSMLLVQLASFYLV and WLMFWSYAFGSCLNHSMTLAI. A Histidine box-1 motif is present at residues 89 to 93; sequence HEISH. Residues 104 to 124 traverse the membrane as a helical segment; it reads WNRWFGMFANLSLGVPYSISF. The Histidine box-2 signature appears at 128-132; it reads HMDHH. 3 consecutive transmembrane segments (helical) span residues 152 to 172, 184 to 204, and 210 to 230; these read FFCTTLRKLVWVILQPLFYAF, HLEVINTVIQVTFDVLVYYVF, and VYMLAASLLGLGLHPISGHFI. Residues 259–263 carry the Histidine box-3 motif; it reads HNEHH. Serine 307 is subject to Phosphoserine.

Belongs to the fatty acid desaturase type 1 family. DEGS subfamily. As to quaternary structure, interacts with RLBP1; the interaction increases synthesis of chromophore-precursors by DEGS1. Post-translationally, myristoylation can target the enzyme to the mitochondria leading to an increase in ceramide levels.

It is found in the mitochondrion membrane. The protein localises to the endoplasmic reticulum membrane. The catalysed reaction is an N-acylsphinganine + 2 Fe(II)-[cytochrome b5] + O2 + 2 H(+) = an N-acylsphing-4-enine + 2 Fe(III)-[cytochrome b5] + 2 H2O. It catalyses the reaction all-trans-retinol = 11-cis-retinol. It carries out the reaction all-trans-retinol = 9-cis-retinol. The enzyme catalyses all-trans-retinol = 13-cis-retinol. The catalysed reaction is 11-cis-retinol = 13-cis-retinol. It catalyses the reaction 11-cis-retinol = 9-cis-retinol. Functionally, has sphingolipid-delta-4-desaturase activity. Converts D-erythro-sphinganine to D-erythro-sphingosine (E-sphing-4-enine). Catalyzes the equilibrium isomerization of retinols. In Rattus norvegicus (Rat), this protein is Sphingolipid delta(4)-desaturase DES1.